The primary structure comprises 315 residues: Methionyl-tRNA formyltransferase (315 aa).

114-117 is a (6S)-5,6,7,8-tetrahydrofolate binding site; the sequence is SLLP.

It belongs to the Fmt family.

It carries out the reaction L-methionyl-tRNA(fMet) + (6R)-10-formyltetrahydrofolate = N-formyl-L-methionyl-tRNA(fMet) + (6S)-5,6,7,8-tetrahydrofolate + H(+). Its function is as follows. Attaches a formyl group to the free amino group of methionyl-tRNA(fMet). The formyl group appears to play a dual role in the initiator identity of N-formylmethionyl-tRNA by promoting its recognition by IF2 and preventing the misappropriation of this tRNA by the elongation apparatus. The polypeptide is Methionyl-tRNA formyltransferase (Corynebacterium efficiens (strain DSM 44549 / YS-314 / AJ 12310 / JCM 11189 / NBRC 100395)).